The primary structure comprises 498 residues: ATP synthase subunit beta, chloroplastic (498 aa).

Position 172-179 (172-179) interacts with ATP; it reads GGAGVGKT.

This sequence belongs to the ATPase alpha/beta chains family. As to quaternary structure, F-type ATPases have 2 components, CF(1) - the catalytic core - and CF(0) - the membrane proton channel. CF(1) has five subunits: alpha(3), beta(3), gamma(1), delta(1), epsilon(1). CF(0) has four main subunits: a(1), b(1), b'(1) and c(9-12).

Its subcellular location is the plastid. It is found in the chloroplast thylakoid membrane. It carries out the reaction ATP + H2O + 4 H(+)(in) = ADP + phosphate + 5 H(+)(out). Functionally, produces ATP from ADP in the presence of a proton gradient across the membrane. The catalytic sites are hosted primarily by the beta subunits. The polypeptide is ATP synthase subunit beta, chloroplastic (Hyophorbe lagenicaulis (Bottle palm)).